We begin with the raw amino-acid sequence, 60 residues long: Mastoparan-VB2 (60 aa).

Positions 1 to 27 (MKNTILLLFTAFIFLMGFFGMSADALA) are cleaved as a signal peptide. AXPX repeat units lie at residues 27–30 (ADPK), 31–34 (ADPL), 35–38 (AGPF), and 41–44 (ADPD). The propeptide occupies 28-45 (DPKADPLAGPFPDADPDP). Leucine 59 bears the Leucine amide mark.

The protein belongs to the MCD family. Mastoparan subfamily. In terms of tissue distribution, expressed by the venom gland.

Its subcellular location is the secreted. The protein resides in the target cell membrane. Its function is as follows. Antimicrobial peptide. Shows activity against both Gram-positive and -negative bacteria, as well against fungi. Also promotes moderate mast cell degranulation. Does not show hemolytic activity on rabbit and human erythrocytes. Its mast cell degranulation activity may be related to the activation of G-protein coupled receptors in mast cells as well as interaction with other proteins located in cell endosomal membranes in the mast cells. This Vespa bicolor (Black shield wasp) protein is Mastoparan-VB2.